Consider the following 309-residue polypeptide: MIQSTGVTHTDKSAQENPVKYRDNFTPVIITGMSGAGLSTAARVLEDLGWYVAHNIPPQIILELIDMCAREDSPVDKVAVVCDVRSREFRGSLTQVVSELRDKQLDPTVLFLEARDEVLIKRFDNVRRTHPLQGSQTLQVGIERERTVLSPVKEDASVVIDTSDLSVHDLRRAIESSFRTIATRTQHVTIESFGFKHGSPRDADFVVDVRFLPNPFWVPELRPFRGVDKPVSDYVLSQKGAEEFLNNFVDMLKDMLPGYRHEGKNFITIGVGCTGGHHRSVAVSEELAKRIADQTTLDVSVVHRDINRH.

32–39 is a binding site for ATP; the sequence is GMSGAGLS. Residue 83–86 participates in GTP binding; the sequence is DVRS.

It belongs to the RapZ-like family.

Its function is as follows. Displays ATPase and GTPase activities. The sequence is that of Nucleotide-binding protein cgR_1639 from Corynebacterium glutamicum (strain R).